A 77-amino-acid polypeptide reads, in one-letter code: UPF0291 protein BLi02035/BL02933 (77 aa).

The interval 57-77 is disordered; sequence PEGNDVTPEKLKQEKRNRRLH.

This sequence belongs to the UPF0291 family.

The protein localises to the cytoplasm. This chain is UPF0291 protein BLi02035/BL02933, found in Bacillus licheniformis (strain ATCC 14580 / DSM 13 / JCM 2505 / CCUG 7422 / NBRC 12200 / NCIMB 9375 / NCTC 10341 / NRRL NRS-1264 / Gibson 46).